Here is a 271-residue protein sequence, read N- to C-terminus: Magnetosome protein MamX (271 aa).

Residues 1–10 (MSSKAVAHPN) are Cytoplasmic-facing. A helical transmembrane segment spans residues 11–31 (IAVWIMALGIAFSMALVLTAV). Topologically, residues 32–271 (FNANPWEDHT…NAGGMDAEER (240 aa)) are lumenal. Residues 48–71 (IVAGMPAPHRDGREKMVCSSCHIV) carry the MCR (magnetochrome) 1 motif. C65, C68, H69, C104, C107, and H108 together coordinate heme. Positions 87–110 (IVQGTPAPHVDGREKMPCASCHTI) match the MCR 2 motif.

Belongs to the magnetosome MamX family. Heme serves as cofactor.

The protein resides in the magnetosome membrane. Functionally, required for correct biomineralization of the magnetosome, may be involved in redox control of biomineralization. May function with MamY, MamZ amd Mms6. This is Magnetosome protein MamX (mamX) from Paramagnetospirillum magneticum (strain ATCC 700264 / AMB-1) (Magnetospirillum magneticum).